The following is a 346-amino-acid chain: Histidinol-phosphate aminotransferase (346 aa).

Lys206 carries the N6-(pyridoxal phosphate)lysine modification.

It belongs to the class-II pyridoxal-phosphate-dependent aminotransferase family. Histidinol-phosphate aminotransferase subfamily. In terms of assembly, homodimer. Requires pyridoxal 5'-phosphate as cofactor.

The enzyme catalyses L-histidinol phosphate + 2-oxoglutarate = 3-(imidazol-4-yl)-2-oxopropyl phosphate + L-glutamate. It functions in the pathway amino-acid biosynthesis; L-histidine biosynthesis; L-histidine from 5-phospho-alpha-D-ribose 1-diphosphate: step 7/9. This chain is Histidinol-phosphate aminotransferase, found in Bacteroides thetaiotaomicron (strain ATCC 29148 / DSM 2079 / JCM 5827 / CCUG 10774 / NCTC 10582 / VPI-5482 / E50).